Here is a 638-residue protein sequence, read N- to C-terminus: Meiosis initiator protein (638 aa).

Disordered regions lie at residues 1-21 (MFGS…SLGP), 60-79 (NQRN…KNHT), 138-249 (LAGL…KGGQ), 404-433 (PSAY…SLHR), and 447-537 (GNSK…PCPP). A compositionally biased stretch (polar residues) spans 7-20 (YLGSSEQPRANSLG). The tract at residues 62-75 (RNQNKLLSPNKKQR) is basic motif; degenerate. In terms of domain architecture, bHLH spans 62–116 (RNQNKLLSPNKKQRKNHTSKLQELALLLPIALKTGTKKLTKKEILVHVLQYIQYL). Residues 76–116 (KNHTSKLQELALLLPIALKTGTKKLTKKEILVHVLQYIQYL) form a helix-loop-helix motif region. A compositionally biased stretch (low complexity) spans 157 to 167 (TPSSSPSSQKS). Polar residues predominate over residues 182-191 (TQASESQTRT). Basic and acidic residues predominate over residues 412–430 (PQEKDTASKAPKDPPESHS). Residues 453–465 (SSSSSSSSSSSSS) show a composition bias toward low complexity. Residues 528-537 (KEKKKGPCPP) show a composition bias toward basic residues. The HMG box DNA-binding region spans 540 to 608 (KKKCVNGFIM…QHNRIVKQDG (69 aa)).

Interacts with STRA8.

It is found in the nucleus. In terms of biological role, gatekeeper of meiotic initiation in both male and female germ cells. In complex with STRA8, directly activates the transcription of a subset of critical meiotic genes playing a central role in cell-cycle switching from mitosis to meiosis. Temporal expression of MEIOSIN is required for meiotic entry decision. The polypeptide is Meiosis initiator protein (Homo sapiens (Human)).